The sequence spans 311 residues: L-lactate dehydrogenase 2 (311 aa).

Val-14, Asp-35, and Arg-40 together coordinate NAD(+). Arg-90 is a binding site for substrate. Residues Ser-103, 120-122 (ATN), and Thr-145 contribute to the NAD(+) site. Substrate is bound at residue 122 to 125 (NPCD). 150–153 (DTTR) contributes to the substrate binding site. His-177 acts as the Proton acceptor in catalysis. Residue Thr-230 participates in substrate binding.

Belongs to the LDH/MDH superfamily. LDH family. As to quaternary structure, homotetramer.

The protein resides in the cytoplasm. The catalysed reaction is (S)-lactate + NAD(+) = pyruvate + NADH + H(+). It participates in fermentation; pyruvate fermentation to lactate; (S)-lactate from pyruvate: step 1/1. In terms of biological role, catalyzes the conversion of lactate to pyruvate. The sequence is that of L-lactate dehydrogenase 2 from Listeria innocua serovar 6a (strain ATCC BAA-680 / CLIP 11262).